Reading from the N-terminus, the 423-residue chain is UDP-N-acetylglucosamine 1-carboxyvinyltransferase 2 (423 aa).

Lysine 23–asparagine 24 provides a ligand contact to phosphoenolpyruvate. Arginine 93 contacts UDP-N-acetyl-alpha-D-glucosamine. The Proton donor role is filled by cysteine 117. Residue cysteine 117 is modified to 2-(S-cysteinyl)pyruvic acid O-phosphothioketal. Residues arginine 122–glutamine 126, aspartate 305, and isoleucine 327 each bind UDP-N-acetyl-alpha-D-glucosamine.

Belongs to the EPSP synthase family. MurA subfamily.

Its subcellular location is the cytoplasm. The enzyme catalyses phosphoenolpyruvate + UDP-N-acetyl-alpha-D-glucosamine = UDP-N-acetyl-3-O-(1-carboxyvinyl)-alpha-D-glucosamine + phosphate. Its pathway is cell wall biogenesis; peptidoglycan biosynthesis. In terms of biological role, cell wall formation. Adds enolpyruvyl to UDP-N-acetylglucosamine. The protein is UDP-N-acetylglucosamine 1-carboxyvinyltransferase 2 of Listeria monocytogenes serotype 4b (strain F2365).